A 1013-amino-acid chain; its full sequence is AP-2 complex subunit alpha-2 (1013 aa).

HEAT repeat units lie at residues 254–289 (AMRA…VVKN), 354–391 (DIIK…VSNA), 393–430 (DIVE…DLSW), and 521–565 (TVST…CIDV). The disordered stretch occupies residues 652–676 (STDPESVARSLSHPNGTLSNIDPQT). Residues 663–675 (SHPNGTLSNIDPQ) are compositionally biased toward polar residues. Residues 742 to 841 (ALCLKDSGVL…LDFSYKFGTN (100 aa)) enclose the GAE domain. The required for AP180 binding stretch occupies residues 760–1013 (GIKAEWRGHH…DPGAMLAGLL (254 aa)).

It belongs to the adaptor complexes large subunit family. Adaptor protein complex 2 (AP-2) is a heterotetramer composed of two large adaptins (alpha-type and beta-type subunits), a medium adaptin (mu-type subunit) and a small adaptin (sigma-type subunit). Interacts with AP180.

Its subcellular location is the membrane. It is found in the coated pit. Its function is as follows. Subunit of the adaptor protein complex 2 (AP-2). Adaptor protein complexes function in protein transport via transport vesicles in different membrane traffic pathways. Adaptor protein complexes are vesicle coat components and appear to be involved in cargo selection and vesicle formation. AP-2 is involved in clathrin-dependent endocytosis in which cargo proteins are incorporated into vesicles surrounded by clathrin (clathrin-coated vesicles, CCVs) which are destined for fusion with the early endosome. The complex binds polyphosphoinositides. This Arabidopsis thaliana (Mouse-ear cress) protein is AP-2 complex subunit alpha-2 (ALPHAC-AD).